We begin with the raw amino-acid sequence, 282 residues long: Elongation factor Ts (282 aa).

Positions 80–83 (TDFV) are involved in Mg(2+) ion dislocation from EF-Tu.

Belongs to the EF-Ts family.

Its subcellular location is the cytoplasm. Its function is as follows. Associates with the EF-Tu.GDP complex and induces the exchange of GDP to GTP. It remains bound to the aminoacyl-tRNA.EF-Tu.GTP complex up to the GTP hydrolysis stage on the ribosome. The protein is Elongation factor Ts (tsf) of Pasteurella multocida (strain Pm70).